We begin with the raw amino-acid sequence, 373 residues long: COP9 signalosome complex subunit 5 (373 aa).

An MPN domain is found at 66–201; it reads CLISRLATTK…IGAFRTLPSK (136 aa). Zn(2+)-binding residues include H147, H149, and D160. Residues 147 to 160 carry the JAMM motif motif; that stretch reads HSHPGYGCWLSNID. The segment at 289 to 325 is disordered; sequence FTHERSNSISSTSSLTTRHTTDVEMDDQESAQSSLDI. The segment covering 295–306 has biased composition (low complexity); that stretch reads NSISSTSSLTTR.

Belongs to the peptidase M67A family. CSN5 subfamily. As to quaternary structure, component of the COP9 signalosome (CSN) complex.

It is found in the cytoplasm. The protein resides in the nucleus. Catalytic Component of the COP9 signalosome (CSN) complex that acts as an regulator of the ubiquitin (Ubl) conjugation pathway by mediating the deneddylation of the cullin subunit of SCF-type E3 ubiquitin-protein ligase complexes. The CNS complex is involved in the regulation of the mating pheromone response. In Kluyveromyces lactis (strain ATCC 8585 / CBS 2359 / DSM 70799 / NBRC 1267 / NRRL Y-1140 / WM37) (Yeast), this protein is COP9 signalosome complex subunit 5 (RRI1).